Reading from the N-terminus, the 289-residue chain is Formamidopyrimidine-DNA glycosylase (289 aa).

The Schiff-base intermediate with DNA role is filled by Pro2. Glu3 acts as the Proton donor in catalysis. Lys60 (proton donor; for beta-elimination activity) is an active-site residue. Positions 94, 126, and 167 each coordinate DNA. The segment at 252-287 (QVYGKPAGTPCPRCGTGLARIRIAGRSSVFCPRCQP) adopts an FPG-type zinc-finger fold. Residue Arg277 is the Proton donor; for delta-elimination activity of the active site.

The protein belongs to the FPG family. Monomer. It depends on Zn(2+) as a cofactor.

The catalysed reaction is Hydrolysis of DNA containing ring-opened 7-methylguanine residues, releasing 2,6-diamino-4-hydroxy-5-(N-methyl)formamidopyrimidine.. It carries out the reaction 2'-deoxyribonucleotide-(2'-deoxyribose 5'-phosphate)-2'-deoxyribonucleotide-DNA = a 3'-end 2'-deoxyribonucleotide-(2,3-dehydro-2,3-deoxyribose 5'-phosphate)-DNA + a 5'-end 5'-phospho-2'-deoxyribonucleoside-DNA + H(+). Functionally, involved in base excision repair of DNA damaged by oxidation or by mutagenic agents. Acts as a DNA glycosylase that recognizes and removes damaged bases. Has a preference for oxidized purines, such as 7,8-dihydro-8-oxoguanine (8-oxoG). Has AP (apurinic/apyrimidinic) lyase activity and introduces nicks in the DNA strand. Cleaves the DNA backbone by beta-delta elimination to generate a single-strand break at the site of the removed base with both 3'- and 5'-phosphates. The protein is Formamidopyrimidine-DNA glycosylase of Thermomicrobium roseum (strain ATCC 27502 / DSM 5159 / P-2).